A 434-amino-acid chain; its full sequence is Gamma-glutamyl phosphate reductase (434 aa).

Belongs to the gamma-glutamyl phosphate reductase family.

It is found in the cytoplasm. It catalyses the reaction L-glutamate 5-semialdehyde + phosphate + NADP(+) = L-glutamyl 5-phosphate + NADPH + H(+). It participates in amino-acid biosynthesis; L-proline biosynthesis; L-glutamate 5-semialdehyde from L-glutamate: step 2/2. In terms of biological role, catalyzes the NADPH-dependent reduction of L-glutamate 5-phosphate into L-glutamate 5-semialdehyde and phosphate. The product spontaneously undergoes cyclization to form 1-pyrroline-5-carboxylate. This Nostoc sp. (strain PCC 7120 / SAG 25.82 / UTEX 2576) protein is Gamma-glutamyl phosphate reductase.